A 191-amino-acid chain; its full sequence is Large ribosomal subunit protein uL6 (191 aa).

It belongs to the universal ribosomal protein uL6 family. In terms of assembly, part of the 50S ribosomal subunit.

This protein binds to the 23S rRNA, and is important in its secondary structure. It is located near the subunit interface in the base of the L7/L12 stalk, and near the tRNA binding site of the peptidyltransferase center. The protein is Large ribosomal subunit protein uL6 of Cyanothece sp. (strain PCC 7425 / ATCC 29141).